A 131-amino-acid chain; its full sequence is Profilin-6 (131 aa).

An intrachain disulfide couples Cys-13 to Cys-115. The Involved in PIP2 interaction motif lies at 81-97; the sequence is AVIRGKKGAGGITIKKT. Thr-111 is subject to Phosphothreonine.

The protein belongs to the profilin family. As to quaternary structure, occurs in many kinds of cells as a complex with monomeric actin in a 1:1 ratio. In terms of processing, phosphorylated by MAP kinases.

The protein resides in the cytoplasm. Its subcellular location is the cytoskeleton. Binds to actin and affects the structure of the cytoskeleton. At high concentrations, profilin prevents the polymerization of actin, whereas it enhances it at low concentrations. The polypeptide is Profilin-6 (Phleum pratense (Common timothy)).